The sequence spans 80 residues: Defensin-like protein 2 (80 aa).

Residues 1-29 form the signal peptide; that stretch reads MAKFASIIVLLFVALVVFAAFEEPTMVEA. At Gln30 the chain carries Pyrrolidone carboxylic acid. 4 disulfide bridges follow: Cys33–Cys80, Cys44–Cys65, Cys50–Cys74, and Cys54–Cys76.

This sequence belongs to the DEFL family.

The protein localises to the secreted. Possesses antifungal activity sensitive to inorganic cations. Induces potential changes in fungal membranes and increased K(+) efflux and Ca(2+) uptake. The protein is Defensin-like protein 2 (AFP2) of Raphanus sativus (Radish).